We begin with the raw amino-acid sequence, 744 residues long: Phosphoribosylformylglycinamidine synthase subunit PurL (744 aa).

His-49 is a catalytic residue. Residues Tyr-52 and Lys-91 each coordinate ATP. Glu-93 lines the Mg(2+) pocket. Residues Ser-94–His-97 and Arg-116 contribute to the substrate site. Catalysis depends on His-95, which acts as the Proton acceptor. Asp-117 provides a ligand contact to Mg(2+). Position 240 (Gln-240) interacts with substrate. Asp-268 contributes to the Mg(2+) binding site. Glu-312–Gln-314 contacts substrate. Residues Asp-493 and Gly-530 each contribute to the ATP site. Asn-531 lines the Mg(2+) pocket. Ser-533 is a substrate binding site.

It belongs to the FGAMS family. Monomer. Part of the FGAM synthase complex composed of 1 PurL, 1 PurQ and 2 PurS subunits.

Its subcellular location is the cytoplasm. It carries out the reaction N(2)-formyl-N(1)-(5-phospho-beta-D-ribosyl)glycinamide + L-glutamine + ATP + H2O = 2-formamido-N(1)-(5-O-phospho-beta-D-ribosyl)acetamidine + L-glutamate + ADP + phosphate + H(+). The protein operates within purine metabolism; IMP biosynthesis via de novo pathway; 5-amino-1-(5-phospho-D-ribosyl)imidazole from N(2)-formyl-N(1)-(5-phospho-D-ribosyl)glycinamide: step 1/2. Its function is as follows. Part of the phosphoribosylformylglycinamidine synthase complex involved in the purines biosynthetic pathway. Catalyzes the ATP-dependent conversion of formylglycinamide ribonucleotide (FGAR) and glutamine to yield formylglycinamidine ribonucleotide (FGAM) and glutamate. The FGAM synthase complex is composed of three subunits. PurQ produces an ammonia molecule by converting glutamine to glutamate. PurL transfers the ammonia molecule to FGAR to form FGAM in an ATP-dependent manner. PurS interacts with PurQ and PurL and is thought to assist in the transfer of the ammonia molecule from PurQ to PurL. The chain is Phosphoribosylformylglycinamidine synthase subunit PurL from Nitrobacter hamburgensis (strain DSM 10229 / NCIMB 13809 / X14).